Reading from the N-terminus, the 92-residue chain is Small ribosomal subunit protein bS18 (92 aa).

The tract at residues 1–27 is disordered; sequence MTQQSNSADRKPRGKGPKRPRKPKVDP. The span at 12–22 shows a compositional bias: basic residues; sequence PRGKGPKRPRK.

Belongs to the bacterial ribosomal protein bS18 family. Part of the 30S ribosomal subunit. Forms a tight heterodimer with protein bS6.

Its function is as follows. Binds as a heterodimer with protein bS6 to the central domain of the 16S rRNA, where it helps stabilize the platform of the 30S subunit. The protein is Small ribosomal subunit protein bS18 of Deinococcus deserti (strain DSM 17065 / CIP 109153 / LMG 22923 / VCD115).